The chain runs to 1009 residues: Type VII secretion system accessory factor EsaA (1009 aa).

6 helical membrane passes run 7–27 (IYAL…IFFV), 822–842 (ISPT…AYIF), 869–889 (VITS…VGLI), 903–923 (KFIL…TYLL), 928–948 (SIGM…MNNL), and 979–999 (IGLA…LNMF).

The protein belongs to the EsaA family. In terms of assembly, homodimer. Interacts with EssB.

The protein localises to the cell membrane. Its function is as follows. Component of the type VII secretion system (Ess). Provides together with EssB and other components such as EssC and EssE a secretion platform across the cytoplasmic membrane in the host. In Staphylococcus aureus (strain Mu50 / ATCC 700699), this protein is Type VII secretion system accessory factor EsaA.